Consider the following 452-residue polypeptide: FAD-linked oxidoreductase DDB_G0289697 (452 aa).

Residues 44-212 form the FAD-binding PCMH-type domain; the sequence is VVNTPLLIVY…TDFTFKLHPV (169 aa). Residue His81 is modified to Pros-8alpha-FAD histidine.

This sequence belongs to the oxygen-dependent FAD-linked oxidoreductase family. FAD is required as a cofactor.

In Dictyostelium discoideum (Social amoeba), this protein is FAD-linked oxidoreductase DDB_G0289697.